Consider the following 1378-residue polypeptide: Bud site selection protein 4 (1378 aa).

Disordered regions lie at residues 71-95, 361-441, and 458-480; these read NNVI…NNDK, KDSP…NSES, and TNKS…LKSS. The span at 361–378 shows a compositional bias: basic and acidic residues; sequence KDSPENTLHTNEDQKEAN. Positions 406-415 are enriched in low complexity; that stretch reads STITNITNDT. A compositionally biased stretch (basic and acidic residues) spans 420–430; the sequence is EGSKAEEDAKN. Residues 431–441 are compositionally biased toward polar residues; the sequence is SDVSNSQNSES. The span at 470–480 shows a compositional bias: basic and acidic residues; sequence EPPKENELKSS. Residues 1240–1357 enclose the PH domain; sequence LISKEGYLMQ…WYSKLKKTVD (118 aa).

Belongs to the BUD4 family.

The protein localises to the bud neck. In terms of biological role, required for selection of future bud sites. Cooperates with other bud site selection proteins to recognize a spatial landmark during mitosis and they subsequently become a landmark for downstream polarity establishment factors that coordinate budding and cytokinesis. Involved in the septin organization at the bud neck. The polypeptide is Bud site selection protein 4 (BUD4) (Vanderwaltozyma polyspora (strain ATCC 22028 / DSM 70294 / BCRC 21397 / CBS 2163 / NBRC 10782 / NRRL Y-8283 / UCD 57-17) (Kluyveromyces polysporus)).